The sequence spans 357 residues: Protein-L-isoaspartate O-methyltransferase domain-containing protein 1 (357 aa).

Gly-2 is lipidated: N-myristoyl glycine. Ser-64 is an active-site residue. 3 adoMet binding motif regions span residues 85–94, 160–164, and 181–191; these read LNLGSGTGYL, YDRIY, and LKVGGILVMPI. Residues 240 to 250 form a BC-box region; it reads VRNLQDLARIY. A disordered region spans residues 299–333; that stretch reads PLDSEEDEKMEEDNKEEEEKDHNEAMKPEEPPQNL. Over residues 301-317 the composition is skewed to acidic residues; sequence DSEEDEKMEEDNKEEEE. Basic and acidic residues predominate over residues 318–333; sequence KDHNEAMKPEEPPQNL. The CUL-box stretch occupies residues 341–344; sequence LPLP.

Belongs to the methyltransferase superfamily. L-isoaspartyl/D-aspartyl protein methyltransferase family. Component of the probable ECS(PCMTD1) E3 ubiquitin-protein ligase complex, at least composed of CUL5, ELOB, ELOC, RBX2 and PCMTD1. Interacts (via the BC-box) with ELOB and ELOC; the interaction is direct and stabilizes PCMTD1.

Its subcellular location is the cytoplasm. The protein resides in the membrane. In terms of biological role, substrate recognition component of an ECS (Elongin BC-CUL5-SOCS-box protein) E3 ubiquitin ligase complex which mediates the ubiquitination and subsequent proteasomal degradation of target proteins. Specifically binds to the methyltransferase cofactor S-adenosylmethionine (AdoMet) via the N-terminal AdoMet binding motif, but does not display methyltransferase activity. May provide an alternate maintenance pathway for modified proteins by acting as a damage-specific E3 ubiquitin ligase adaptor protein. The chain is Protein-L-isoaspartate O-methyltransferase domain-containing protein 1 from Homo sapiens (Human).